Here is a 441-residue protein sequence, read N- to C-terminus: Ribulose bisphosphate carboxylase large chain (441 aa).

Substrate-binding residues include asparagine 89 and threonine 139. Residue lysine 141 is the Proton acceptor of the active site. Lysine 143 contributes to the substrate binding site. Lysine 167, aspartate 169, and glutamate 170 together coordinate Mg(2+). Lysine 167 carries the post-translational modification N6-carboxylysine. Histidine 260 acts as the Proton acceptor in catalysis. The substrate site is built by arginine 261, histidine 293, and serine 345.

This sequence belongs to the RuBisCO large chain family. Type I subfamily. Heterohexadecamer of 8 large chains and 8 small chains; disulfide-linked. The disulfide link is formed within the large subunit homodimers. The cofactor is Mg(2+). The disulfide bond which can form in the large chain dimeric partners within the hexadecamer appears to be associated with oxidative stress and protein turnover.

It is found in the plastid. The protein resides in the chloroplast. The catalysed reaction is 2 (2R)-3-phosphoglycerate + 2 H(+) = D-ribulose 1,5-bisphosphate + CO2 + H2O. The enzyme catalyses D-ribulose 1,5-bisphosphate + O2 = 2-phosphoglycolate + (2R)-3-phosphoglycerate + 2 H(+). In terms of biological role, ruBisCO catalyzes two reactions: the carboxylation of D-ribulose 1,5-bisphosphate, the primary event in carbon dioxide fixation, as well as the oxidative fragmentation of the pentose substrate in the photorespiration process. Both reactions occur simultaneously and in competition at the same active site. The chain is Ribulose bisphosphate carboxylase large chain from Viola sororia (Woolly blue violet).